A 502-amino-acid chain; its full sequence is Hexokinase-4 (502 aa).

A helical transmembrane segment spans residues 4–24 (VLVMLTAAAAVVACSVATVMV). One can recognise a Hexokinase domain in the interval 35–491 (RRVVGLLKDL…SSIGSALLLA (457 aa)). Positions 90–228 (NGSETGTYYA…GLDIRVAALV (139 aa)) are hexokinase small subdomain. The ADP site is built by Gly104 and Ser105. Thr194, Lys195, Asn229, and Asp230 together coordinate D-glucose. The tract at residues 229-480 (NDTVGALSFG…QHVVVKAMED (252 aa)) is hexokinase large subdomain. Residue Thr253 participates in ADP binding. 3 residues coordinate D-glucose: Asn256, Glu284, and Glu315. An ADP-binding site is contributed by Gly445.

This sequence belongs to the hexokinase family.

The protein resides in the mitochondrion outer membrane. The enzyme catalyses a D-hexose + ATP = a D-hexose 6-phosphate + ADP + H(+). The catalysed reaction is D-fructose + ATP = D-fructose 6-phosphate + ADP + H(+). It carries out the reaction D-glucose + ATP = D-glucose 6-phosphate + ADP + H(+). The protein operates within carbohydrate metabolism; hexose metabolism. Its pathway is carbohydrate degradation; glycolysis; D-glyceraldehyde 3-phosphate and glycerone phosphate from D-glucose: step 1/4. In terms of biological role, fructose and glucose phosphorylating enzyme. May be involved in the phosphorylation of glucose during the export from mitochondrion to cytosol. In Arabidopsis thaliana (Mouse-ear cress), this protein is Hexokinase-4.